The primary structure comprises 307 residues: Mediator of RNA polymerase II transcription subunit 18 (307 aa).

The span at 117 to 126 (TNFNSTNEDQ) shows a compositional bias: polar residues. The disordered stretch occupies residues 117–162 (TNFNSTNEDQNNSKHTEDTVNESRNSDDIIDVDMDASPAPSNESCS).

This sequence belongs to the Mediator complex subunit 18 family. As to quaternary structure, component of the Mediator complex, which is composed of at least 21 subunits that form three structurally distinct submodules. The Mediator head module contains MED6, MED8, MED11, SRB4/MED17, SRB5/MED18, ROX3/MED19, SRB2/MED20 and SRB6/MED22, the middle module contains MED1, MED4, NUT1/MED5, MED7, CSE2/MED9, NUT2/MED10, SRB7/MED21 and SOH1/MED31, and the tail module contains MED2, PGD1/MED3, RGR1/MED14, GAL11/MED15 and SIN4/MED16. The head and the middle modules interact directly with RNA polymerase II, whereas the elongated tail module interacts with gene-specific regulatory proteins. SRB5/MED18 interacts directly with MED8 and SRB2/MED20.

It is found in the nucleus. Functionally, component of the Mediator complex, a coactivator involved in the regulated transcription of nearly all RNA polymerase II-dependent genes. Mediator functions as a bridge to convey information from gene-specific regulatory proteins to the basal RNA polymerase II transcription machinery. The Mediator complex, having a compact conformation in its free form, is recruited to promoters by direct interactions with regulatory proteins and serves for the assembly of a functional preinitiation complex with RNA polymerase II and the general transcription factors. The Mediator complex unfolds to an extended conformation and partially surrounds RNA polymerase II, specifically interacting with the unphosphorylated form of the C-terminal domain (CTD) of RNA polymerase II. The Mediator complex dissociates from the RNA polymerase II holoenzyme and stays at the promoter when transcriptional elongation begins. This Saccharomyces cerevisiae (strain ATCC 204508 / S288c) (Baker's yeast) protein is Mediator of RNA polymerase II transcription subunit 18 (SRB5).